Here is a 120-residue protein sequence, read N- to C-terminus: Immunoglobulin kappa variable 2-29 (120 aa).

An N-terminal signal peptide occupies residues methionine 1–alanine 20. A framework-1 region spans residues aspartate 21–cysteine 43. The Ig-like domain maps to aspartate 21–proline 120. Cysteine 43 and cysteine 113 are joined by a disulfide. The segment at lysine 44–tyrosine 59 is complementarity-determining-1. The tract at residues tryptophan 60–tyrosine 74 is framework-2. Positions glutamate 75–serine 81 are complementarity-determining-2. The framework-3 stretch occupies residues glycine 82–cysteine 113. The complementarity-determining-3 stretch occupies residues methionine 114 to proline 120.

Immunoglobulins are composed of two identical heavy chains and two identical light chains; disulfide-linked.

It is found in the secreted. Its subcellular location is the cell membrane. Functionally, v region of the variable domain of immunoglobulin light chains that participates in the antigen recognition. Immunoglobulins, also known as antibodies, are membrane-bound or secreted glycoproteins produced by B lymphocytes. In the recognition phase of humoral immunity, the membrane-bound immunoglobulins serve as receptors which, upon binding of a specific antigen, trigger the clonal expansion and differentiation of B lymphocytes into immunoglobulins-secreting plasma cells. Secreted immunoglobulins mediate the effector phase of humoral immunity, which results in the elimination of bound antigens. The antigen binding site is formed by the variable domain of one heavy chain, together with that of its associated light chain. Thus, each immunoglobulin has two antigen binding sites with remarkable affinity for a particular antigen. The variable domains are assembled by a process called V-(D)-J rearrangement and can then be subjected to somatic hypermutations which, after exposure to antigen and selection, allow affinity maturation for a particular antigen. This is Immunoglobulin kappa variable 2-29 from Homo sapiens (Human).